The chain runs to 295 residues: uncharacterized protein (295 aa).

It localises to the plastid. The protein resides in the chloroplast. This is an uncharacterized protein from Euglena gracilis.